Consider the following 137-residue polypeptide: Proline-rich protein 13 (137 aa).

2 disordered regions span residues 26–54 (PPPLNPAFPPGPCPPGIPQGNPAFPPCRP) and 94–137 (VGPG…SDSD). Over residues 103 to 124 (KTRKKMKKAHKKSHKHHKHGKH) the composition is skewed to basic residues. Low complexity predominate over residues 125 to 137 (SSSSSSSSSSDSD).

The protein localises to the nucleus. Negatively regulates TSP1 expression at the level of transcription. This down-regulation was shown to reduce taxane-induced apoptosis. The chain is Proline-rich protein 13 (Prr13) from Mus musculus (Mouse).